The sequence spans 258 residues: Alpha-fibrinogenase (258 aa).

A signal peptide spans 1 to 18 (MVLIRVLANLVMLHLSYG). A propeptide spanning residues 19–24 (EKSSEL) is cleaved from the precursor. A Peptidase S1 domain is found at 25 to 249 (VIGGRPCNIN…YNDWIQSIIA (225 aa)). 6 disulfides stabilise this stretch: Cys31–Cys163, Cys50–Cys66, Cys98–Cys256, Cys142–Cys210, Cys174–Cys189, and Cys200–Cys225. N-linked (GlcNAc...) asparagine glycosylation is present at Asn44. The Charge relay system role is filled by His65. N-linked (GlcNAc...) asparagine glycans are attached at residues Asn79 and Asn101. The Charge relay system role is filled by Asp110. Ser204 serves as the catalytic Charge relay system.

The protein belongs to the peptidase S1 family. Snake venom subfamily. In terms of assembly, monomer. Glycosylated. Contains 8.5% of hexoses, 5.8% of hexosamines and 0.8% of sialic acids. In terms of tissue distribution, expressed by the venom gland.

The protein resides in the secreted. Inhibited by diisopropylfluorophosphate (DFP) and PMSF, and partially by soybean trypsin inhibitor, but not by EDTA. Its function is as follows. Degrades alpha chain of fibrinogen (FGA), and has strong caseinolytic activity. Cleaves oxidized insulin B-chain at '40-Tyr-|-Leu-41', '48-Phe-|-Phe-49' and '49-Phe-|-Tyr-50', and glucagon at the bonds '62-Tyr-|-Ser-63', 66-Leu-|-Asp-67' and '78-Leu-|-Met-79' bonds. This is Alpha-fibrinogenase from Macrovipera lebetinus (Levantine viper).